The primary structure comprises 203 residues: Ribosomal RNA small subunit methyltransferase G (203 aa).

Residues G73, L78, 124 to 125 (VE), and R138 contribute to the S-adenosyl-L-methionine site.

The protein belongs to the methyltransferase superfamily. RNA methyltransferase RsmG family.

The protein localises to the cytoplasm. It carries out the reaction guanosine(527) in 16S rRNA + S-adenosyl-L-methionine = N(7)-methylguanosine(527) in 16S rRNA + S-adenosyl-L-homocysteine. In terms of biological role, specifically methylates the N7 position of guanine in position 527 of 16S rRNA. This chain is Ribosomal RNA small subunit methyltransferase G, found in Haemophilus ducreyi (strain 35000HP / ATCC 700724).